The primary structure comprises 330 residues: Acrylyl-CoA reductase AcuI (330 aa).

Residues Y44, 159–162, 181–183, R201, L247, and S272 each bind NADP(+); these read AGGV and TGR.

This sequence belongs to the zinc-containing alcohol dehydrogenase family. Acrylyl-CoA reductase subfamily. As to quaternary structure, homodimer.

Its subcellular location is the cytoplasm. It catalyses the reaction propanoyl-CoA + NADP(+) = acryloyl-CoA + NADPH + H(+). Its function is as follows. Probably catalyzes the NADPH-dependent reduction of acrylyl-CoA to propanoyl-CoA. Restores acrylate resistance when expressed in an E.coli strain K12 acuI deletion. The protein is Acrylyl-CoA reductase AcuI (acuI) of Ruegeria pomeroyi (strain ATCC 700808 / DSM 15171 / DSS-3) (Silicibacter pomeroyi).